Consider the following 330-residue polypeptide: N-acetyl-gamma-glutamyl-phosphate reductase (330 aa).

Residue cysteine 143 is part of the active site.

The protein belongs to the NAGSA dehydrogenase family. Type 1 subfamily.

Its subcellular location is the cytoplasm. The catalysed reaction is N-acetyl-L-glutamate 5-semialdehyde + phosphate + NADP(+) = N-acetyl-L-glutamyl 5-phosphate + NADPH + H(+). The protein operates within amino-acid biosynthesis; L-arginine biosynthesis; N(2)-acetyl-L-ornithine from L-glutamate: step 3/4. Its function is as follows. Catalyzes the NADPH-dependent reduction of N-acetyl-5-glutamyl phosphate to yield N-acetyl-L-glutamate 5-semialdehyde. The sequence is that of N-acetyl-gamma-glutamyl-phosphate reductase from Methanocorpusculum labreanum (strain ATCC 43576 / DSM 4855 / Z).